The following is a 52-amino-acid chain: MRQENKPCQQFYFVLDEKALQSPLRENPSKNVRTIPDAGDENSSFGHARVIA.

A disordered region spans residues 24 to 52; it reads LRENPSKNVRTIPDAGDENSSFGHARVIA.

This is an uncharacterized protein from Treponema pallidum (strain Nichols).